Consider the following 393-residue polypeptide: tRNA(Met) cytidine acetate ligase (393 aa).

Glycine 81, asparagine 142, and arginine 167 together coordinate ATP.

This sequence belongs to the TmcAL family.

It is found in the cytoplasm. The catalysed reaction is cytidine(34) in elongator tRNA(Met) + acetate + ATP = N(4)-acetylcytidine(34) in elongator tRNA(Met) + AMP + diphosphate. Its function is as follows. Catalyzes the formation of N(4)-acetylcytidine (ac(4)C) at the wobble position of elongator tRNA(Met), using acetate and ATP as substrates. First activates an acetate ion to form acetyladenylate (Ac-AMP) and then transfers the acetyl group to tRNA to form ac(4)C34. The chain is tRNA(Met) cytidine acetate ligase from Bacillus cereus (strain ZK / E33L).